Here is a 143-residue protein sequence, read N- to C-terminus: Large ribosomal subunit protein uL11 (143 aa).

This sequence belongs to the universal ribosomal protein uL11 family. As to quaternary structure, part of the ribosomal stalk of the 50S ribosomal subunit. Interacts with L10 and the large rRNA to form the base of the stalk. L10 forms an elongated spine to which L12 dimers bind in a sequential fashion forming a multimeric L10(L12)X complex. One or more lysine residues are methylated.

In terms of biological role, forms part of the ribosomal stalk which helps the ribosome interact with GTP-bound translation factors. This chain is Large ribosomal subunit protein uL11, found in Rhizorhabdus wittichii (strain DSM 6014 / CCUG 31198 / JCM 15750 / NBRC 105917 / EY 4224 / RW1) (Sphingomonas wittichii).